A 392-amino-acid polypeptide reads, in one-letter code: Alanine--glyoxylate aminotransferase (392 aa).

An N6-(pyridoxal phosphate)lysine modification is found at lysine 209. An N6-acetyllysine; alternate modification is found at lysine 225. Residue lysine 225 is modified to N6-succinyllysine; alternate. N6-acetyllysine is present on residues lysine 234 and lysine 312. Residue arginine 360 participates in substrate binding. The short motif at 390-392 (SQL) is the Microbody targeting signal element.

This sequence belongs to the class-V pyridoxal-phosphate-dependent aminotransferase family. In terms of assembly, homodimer. Pyridoxal 5'-phosphate is required as a cofactor.

The protein resides in the peroxisome. It catalyses the reaction L-serine + pyruvate = 3-hydroxypyruvate + L-alanine. The catalysed reaction is glyoxylate + L-alanine = glycine + pyruvate. In terms of biological role, peroxisomal aminotransferase that catalyzes the transamination of glyoxylate to glycine and contributes to the glyoxylate detoxification. Also catalyzes the transamination between L-serine and pyruvate and contributes to gluconeogenesis from the L-serine metabolism. The protein is Alanine--glyoxylate aminotransferase of Oryctolagus cuniculus (Rabbit).